Here is an 88-residue protein sequence, read N- to C-terminus: Small ribosomal subunit protein uS17 (88 aa).

The protein belongs to the universal ribosomal protein uS17 family. As to quaternary structure, part of the 30S ribosomal subunit.

One of the primary rRNA binding proteins, it binds specifically to the 5'-end of 16S ribosomal RNA. The sequence is that of Small ribosomal subunit protein uS17 from Prochlorococcus marinus (strain MIT 9312).